Here is a 204-residue protein sequence, read N- to C-terminus: Shikimate kinase (204 aa).

ATP is bound at residue 35-40 (ASGKST). Serine 39 provides a ligand contact to Mg(2+). Positions 57, 81, and 103 each coordinate substrate. Arginine 142 contacts ATP. Arginine 169 is a binding site for substrate.

The protein belongs to the shikimate kinase family. In terms of assembly, monomer. Mg(2+) serves as cofactor.

Its subcellular location is the cytoplasm. It carries out the reaction shikimate + ATP = 3-phosphoshikimate + ADP + H(+). The protein operates within metabolic intermediate biosynthesis; chorismate biosynthesis; chorismate from D-erythrose 4-phosphate and phosphoenolpyruvate: step 5/7. In terms of biological role, catalyzes the specific phosphorylation of the 3-hydroxyl group of shikimic acid using ATP as a cosubstrate. The protein is Shikimate kinase of Salinibacter ruber (strain DSM 13855 / M31).